Here is a 369-residue protein sequence, read N- to C-terminus: Biglycan (369 aa).

Positions 1–16 are cleaved as a signal peptide; sequence MWPLWLVASLLALSQA. Residues 17–37 constitute a propeptide that is removed on maturation; the sequence is LPFEQKGFWDFTLDDGLPMLN. S42 and S48 each carry an O-linked (Xyl...) (glycosaminoglycan) serine glycan. 2 disulfides stabilise this stretch: C64–C70 and C68–C77. 12 LRR repeats span residues 83-103, 104-127, 128-151, 152-172, 173-196, 197-221, 222-242, 243-266, 267-290, 291-313, 314-343, and 344-369; these read KAVP…NNDI, SELR…NNKI, SKIH…KNHL, VEIP…DNRI, RKVP…GNPL, ENSG…EAKL, TGIP…HNKI, QAIE…HNQI, RMIE…NNKL, SRVP…TNNI, TKVG…NNPV, and PYWE…NYKK. 2 N-linked (GlcNAc...) asparagine glycosylation sites follow: N271 and N312. C322 and C355 are oxidised to a cystine.

Belongs to the small leucine-rich proteoglycan (SLRP) family. SLRP class I subfamily. Homodimer. Forms a ternary complex with MFAP2 and ELN. The two attached glycosaminoglycan chains can be either chondroitin sulfate or dermatan sulfate.

The protein resides in the secreted. Its subcellular location is the extracellular space. The protein localises to the extracellular matrix. In terms of biological role, may be involved in collagen fiber assembly. The protein is Biglycan (BGN) of Canis lupus familiaris (Dog).